We begin with the raw amino-acid sequence, 422 residues long: Cystine lyase CORI3 (422 aa).

It belongs to the class-I pyridoxal-phosphate-dependent aminotransferase family. In terms of assembly, homodimer. The cofactor is pyridoxal 5'-phosphate. As to expression, expressed in cotyledons, sepals, pistils, flower buds, phloem companion cells and vascular tissues of petiole, leaf, filament and fruit.

The enzyme catalyses L-cystine + H2O = S-sulfanyl-L-cysteine + pyruvate + NH4(+). Its function is as follows. Possesses cystine lyase activity in vitro. Does not possess tyrosine aminotransferase, alanine aminotransferase, aspartate aminotransferase and tryptophan aminotransferase activities. The sequence is that of Cystine lyase CORI3 from Arabidopsis thaliana (Mouse-ear cress).